The chain runs to 616 residues: Chaperone protein HscA (616 aa).

It belongs to the heat shock protein 70 family.

Its function is as follows. Chaperone involved in the maturation of iron-sulfur cluster-containing proteins. Has a low intrinsic ATPase activity which is markedly stimulated by HscB. Involved in the maturation of IscU. This Cronobacter sakazakii (strain ATCC BAA-894) (Enterobacter sakazakii) protein is Chaperone protein HscA.